A 266-amino-acid chain; its full sequence is MEESEYESVLCVKPEVHVYRIPPRATNRGYRASEWQLDQPSWSGRLRITAKGKVAYIKLEDRTSGELFAQAPVDQFPGTAVESVTDSSRYFVIRIEDGNGRRAFIGLGFGDRGDAFDFNVALQDHFKWVKQQCEFAKQAQNPDEGPKLDLGFKDGQTIKINIANMRKKEGAAGTPRARPTSAGGLSLLPPPPGGKSSTVIPPSGEQLSVGGSLVQPAVVSGSGGATELWPQSKPAAAATADIWGDFTKSTGSPSSQSQPGTGWVQF.

Disordered stretches follow at residues 165 to 198 (MRKK…KSST) and 245 to 266 (DFTK…WVQF). Residue S181 is modified to Phosphoserine. 2 consecutive short sequence motifs (WXXF motif) follow at residues 243 to 246 (WGDF) and 263 to 266 (WVQF). Low complexity predominate over residues 249 to 266 (STGSPSSQSQPGTGWVQF).

The protein belongs to the NECAP family. Interacts with AP1G1 and AP2A1 components of the adapter protein complexes AP-1 and AP-2. Interacts with the GAE domain proteins GGA1, GGA2 and GGA3. In terms of tissue distribution, expressed in brain, heart, kidney, liver, lung, skeletal muscles and testis (at protein level).

Its subcellular location is the cytoplasmic vesicle. It is found in the clathrin-coated vesicle membrane. It localises to the cell membrane. Involved in endocytosis. This Mus musculus (Mouse) protein is Adaptin ear-binding coat-associated protein 2 (Necap2).